The following is a 341-amino-acid chain: Ribulose-5-phosphate reductase 2 (341 aa).

Positions 38, 64, 65, and 144 each coordinate Zn(2+).

The protein belongs to the zinc-containing alcohol dehydrogenase family. Heterodimer together with TarI. The cofactor is Zn(2+).

The catalysed reaction is D-ribitol 5-phosphate + NADP(+) = D-ribulose 5-phosphate + NADPH + H(+). The protein operates within cell wall biogenesis; poly(ribitol phosphate) teichoic acid biosynthesis. Functionally, catalyzes the NADPH dependent reduction of D-ribulose 5-phosphate to D-ribitol 5-phosphate. The chain is Ribulose-5-phosphate reductase 2 from Staphylococcus aureus (strain NCTC 8325 / PS 47).